The sequence spans 90 residues: Cell division topological specificity factor (90 aa).

It belongs to the MinE family.

Functionally, prevents the cell division inhibition by proteins MinC and MinD at internal division sites while permitting inhibition at polar sites. This ensures cell division at the proper site by restricting the formation of a division septum at the midpoint of the long axis of the cell. In Pelotomaculum thermopropionicum (strain DSM 13744 / JCM 10971 / SI), this protein is Cell division topological specificity factor.